Consider the following 412-residue polypeptide: MEDTTFLEGANLAGITTLMNNLHINEQANLEELEKQVMGKQQSFPTDHFDEELNGLAKSLGINFNDPEFSLDAAHSVISKKPSGRGSDKVHGGIRRDSVCTDSICSDSVCSGSIRSGSIRSGSIRDGSIRDGSIRSGNIRDGSVRSSKTRRGPARNSSSRNDRGYSLSTHRKKYAESEASQKTAISKRDRKNHYAESEYSEKSIKPSTKQVDRLINHLRSNGDPNSFYKKEHDYERKTKLVKLEKINMLLTYLGNEQISTDDIKIPTIDSSMQEIDDVIEMLTLRNVGIRYSSIAEEILIGLARGLEIVFDGTREIPFLNYRPDYTGLHNTFMIKLFKMRYETSQVVGNLVQNMSPLSKICLELGPSLLLYPALIRTKHKASEDLYNLLQKGPEDPFTAYNEIHETLKKNNK.

Repeat copies occupy residues Gly-112 to Ser-116, Gly-117 to Ser-121, Gly-122 to Asp-126, Gly-127 to Asp-131, Gly-132 to Ser-136, Gly-137 to Asp-141, and Gly-142 to Ser-146. Positions Gly-112–Ser-146 are 7 X 5 AA tandem repeats of G-[NS]-[IV]-R-[DS]. Residues Ser-116–Asp-126 are compositionally biased toward low complexity. The segment at Ser-116–Lys-209 is disordered. Residues Asn-192–Lys-209 show a composition bias toward basic and acidic residues.

Belongs to the asfivirus B407L family.

This is an uncharacterized protein from Ornithodoros (relapsing fever ticks).